The primary structure comprises 126 residues: Fluoride-specific ion channel FluC (126 aa).

The next 4 helical transmembrane spans lie at 2–22, 37–57, 65–85, and 99–119; these read LITV…RYLI, VGVL…VVLA, LSPF…AFSL, and AALY…LGMM. Residues Gly75 and Thr78 each contribute to the Na(+) site.

It belongs to the fluoride channel Fluc/FEX (TC 1.A.43) family.

It is found in the cell inner membrane. It catalyses the reaction fluoride(in) = fluoride(out). With respect to regulation, na(+) is not transported, but it plays an essential structural role and its presence is essential for fluoride channel function. Functionally, fluoride-specific ion channel. Important for reducing fluoride concentration in the cell, thus reducing its toxicity. The sequence is that of Fluoride-specific ion channel FluC from Ruegeria sp. (strain TM1040) (Silicibacter sp.).